The chain runs to 836 residues: Hypoxia-inducible factor 1-alpha (836 aa).

The tract at residues 1 to 30 is disordered; sequence MEGAGGENEKKKMSSERRKEKSRDAARSRR. The interaction with TSGA10 stretch occupies residues 1–401; the sequence is MEGAGGENEK…KEPDALTLLA (401 aa). The segment covering 7 to 30 has biased composition (basic and acidic residues); it reads ENEKKKMSSERRKEKSRDAARSRR. Residues 17 to 70 form the bHLH domain; that stretch reads RRKEKSRDAARSRRSKESEVFYELAHQLPLPHNVSSHLDKASVMRLTISYLRVR. Residues 21–30 are DNA-binding; that stretch reads KSRDAARSRR. Residues 80–155 enclose the PAS 1 domain; sequence SEDEMKAQMD…EMLTHRNGPV (76 aa). The required for heterodimer formation with ARNT stretch occupies residues 170–191; that stretch reads RMKCTLTSRGRTMNIKSATWKV. One can recognise a PAS 2 domain in the interval 228-298; that stretch reads PHPSNIEIPL…KTHHDMFTKG (71 aa). Ser-247 is subject to Phosphoserine; by CK1. One can recognise a PAC domain in the interval 302 to 345; the sequence is TGQYRMLAKRGGYVWVETQATVIYNTKNSQPQCIVCVNYVVSGI. An N-terminal VHL recognition site region spans residues 380–417; sequence SEDTSCLFDKLKKEPDALTLLAPAAGDTIISLDFGSDD. Residue Lys-391 forms a Glycyl lysine isopeptide (Lys-Gly) (interchain with G-Cter in SUMO) linkage. Positions 401-613 are ODD; it reads APAAGDTIIS…PSMSTVTGFQ (213 aa). Pro-402 carries the 4-hydroxyproline modification. Lys-476 is covalently cross-linked (Glycyl lysine isopeptide (Lys-Gly) (interchain with G-Cter in SUMO)). Residues 492 to 511 form a disordered region; it reads QIQDQPASPSDGSTRQSSPE. The segment at 544 to 588 is NTAD; the sequence is FKLELVEKLFAEDTEAKNPFSTQDTDLDLEMLAPYIPMDDDFQLR. Lys-545 is modified (N6-acetyllysine; alternate). Residues Lys-545, Lys-551, and Lys-560 each participate in a glycyl lysine isopeptide (Lys-Gly) (interchain with G-Cter in ubiquitin) cross-link. Residue Lys-545 forms a Glycyl lysine isopeptide (Lys-Gly) (interchain with G-Cter in ubiquitin); alternate linkage. Position 564 is a phosphoserine; by GSK3-beta (Ser-564). Thr-568 is modified (phosphothreonine; by GSK3-beta). The interval 569–585 is C-terminal VHL recognition site; that stretch reads DLDLEMLAPYIPMDDDF. Residue Pro-577 is modified to 4-hydroxyproline. Position 589 is a phosphoserine; by PLK3 (Ser-589). An ID region spans residues 589–795; sequence SFDQLSPLES…SDLACRLLGQ (207 aa). Disordered stretches follow at residues 593-684 and 707-734; these read LSPL…DRAG and QRNT…KMEH. Ser-602 is subject to Phosphoserine; by GSK3-beta. Polar residues predominate over residues 608–620; it reads TVTGFQQTQLQKP. Residues 621–632 are compositionally biased toward low complexity; that stretch reads TITATATTTATT. Basic and acidic residues predominate over residues 633-647; sequence DESKTETKDNKEDIK. The span at 652-678 shows a compositional bias: polar residues; that stretch reads SPSSTQVPQETTTAKASAYSGTHSRTA. A Phosphoserine; by PLK3 modification is found at Ser-668. An N6-acetyllysine modification is found at Lys-719. The Nuclear localization signal signature appears at 728–731; sequence RKRK. The CTAD stretch occupies residues 796–836; sequence SMDESGLPQLTSYDCEVNAPIQGSRNLLQGEELLRALDQVN. Position 810 is an S-nitrosocysteine (Cys-810). Asn-813 is subject to (3S)-3-hydroxyasparagine.

As to quaternary structure, interacts with the ARNT; forms a heterodimer that binds core DNA sequence 5'-TACGTG-3' within the hypoxia response element (HRE) of target gene promoters. Interacts with COPS5; the interaction increases the transcriptional activity of HIF1A through increased stability. Interacts with EP300 (via TAZ-type 1 domains); the interaction is stimulated in response to hypoxia and inhibited by CITED2. Interacts with CREBBP (via TAZ-type 1 domains). Interacts with NCOA1, NCOA2, APEX1 and HSP90. Interacts (hydroxylated within the ODD domain) with VHLL (via beta domain); the interaction, leads to polyubiquitination and subsequent HIF1A proteasomal degradation. During hypoxia, sumoylated HIF1A also binds VHL; the interaction promotes the ubiquitination of HIF1A. Interacts with SENP1; the interaction desumoylates HIF1A resulting in stabilization and activation of transcription. Interacts (via the ODD domain) with NAA10; the interaction appears not to acetylate HIF1A nor have any affect on protein stability, during hypoxia. Interacts with RWDD3; the interaction enhances HIF1A sumoylation. Interacts with TSGA10. Interacts with HIF3A. Interacts with RORA (via the DNA binding domain); the interaction enhances HIF1A transcription under hypoxia through increasing protein stability. Interaction with PSMA7 inhibits the transactivation activity of HIF1A under both normoxic and hypoxia-mimicking conditions. Interacts with USP20. Interacts with RACK1; promotes HIF1A ubiquitination and proteasome-mediated degradation. Interacts (via N-terminus) with USP19. Interacts with SIRT2. Interacts (deacetylated form) with EGLN1. Interacts with CBFA2T3. Interacts with HSP90AA1 and HSP90AB1. Interacts with DCUN1D1; this interaction increases the interaction between VHL and DCUN1D1. Interacts with HIF1AN. Post-translationally, S-nitrosylation of Cys-810 may be responsible for increased recruitment of p300 coactivator necessary for transcriptional activity of HIF-1 complex. Requires phosphorylation for DNA-binding. Phosphorylation at Ser-247 by CSNK1D/CK1 represses kinase activity and impairs ARNT binding. Phosphorylation by GSK3-beta and PLK3 promote degradation by the proteasome. In terms of processing, sumoylated; with SUMO1 under hypoxia. Sumoylation is enhanced through interaction with RWDD3. Both sumoylation and desumoylation seem to be involved in the regulation of its stability during hypoxia. Sumoylation can promote either its stabilization or its VHL-dependent degradation by promoting hydroxyproline-independent HIF1A-VHL complex binding, thus leading to HIF1A ubiquitination and proteasomal degradation. Desumoylation by SENP1 increases its stability amd transcriptional activity. There is a disaccord between various publications on the effect of sumoylation and desumoylation on its stability and transcriptional activity. Post-translationally, acetylation of Lys-545 by ARD1 increases interaction with VHL and stimulates subsequent proteasomal degradation. Deacetylation of Lys-719 by SIRT2 increases its interaction with and hydroxylation by EGLN1 thereby inactivating HIF1A activity by inducing its proteasomal degradation. Ubiquitinated; in normoxia, following hydroxylation and interaction with VHL. Lys-545 appears to be the principal site of ubiquitination. Clioquinol, the Cu/Zn-chelator, inhibits ubiquitination through preventing hydroxylation at Asn-813. Ubiquitinated by E3 ligase VHL. Deubiquitinated by UCHL1. In terms of processing, the iron and 2-oxoglutarate dependent 3-hydroxylation of asparagine is (S) stereospecific within HIF CTAD domains. Post-translationally, in normoxia, is hydroxylated on Pro-402 and Pro-577 in the oxygen-dependent degradation domain (ODD) by EGLN1/PHD2 and EGLN2/PHD1. EGLN3/PHD3 has also been shown to hydroxylate Pro-577. The hydroxylated prolines promote interaction with VHL, initiating rapid ubiquitination and subsequent proteasomal degradation. Deubiquitinated by USP20. Under hypoxia, proline hydroxylation is impaired and ubiquitination is attenuated, resulting in stabilization. In normoxia, is hydroxylated on Asn-813 by HIF1AN, thus abrogating interaction with CREBBP and EP300 and preventing transcriptional activation. Repressed by iron ion, via Fe(2+) prolyl hydroxylase (PHD) enzymes-mediated hydroxylation and subsequent proteasomal degradation. In terms of tissue distribution, ubiquitous.

It localises to the cytoplasm. The protein localises to the nucleus. It is found in the nucleus speckle. Its activity is regulated as follows. Induced by reactive oxygen species (ROS). In terms of biological role, functions as a master transcriptional regulator of the adaptive response to hypoxia. Under hypoxic conditions, activates the transcription of over 40 genes, including erythropoietin, glucose transporters, glycolytic enzymes, vascular endothelial growth factor, HILPDA, and other genes whose protein products increase oxygen delivery or facilitate metabolic adaptation to hypoxia. Plays an essential role in embryonic vascularization, tumor angiogenesis and pathophysiology of ischemic disease. Heterodimerizes with ARNT; heterodimer binds to core DNA sequence 5'-TACGTG-3' within the hypoxia response element (HRE) of target gene promoters. Activation requires recruitment of transcriptional coactivators such as CREBBP and EP300. Activity is enhanced by interaction with NCOA1 and/or NCOA2. Interaction with redox regulatory protein APEX1 seems to activate CTAD and potentiates activation by NCOA1 and CREBBP. Involved in the axonal distribution and transport of mitochondria in neurons during hypoxia. The polypeptide is Hypoxia-inducible factor 1-alpha (Hif1a) (Mus musculus (Mouse)).